The sequence spans 769 residues: Integrin beta-2 (769 aa).

Positions 1-22 are cleaved as a signal peptide; sequence MLCRCSPLLLLVGLLTLRSALS. Glutamine 23 bears the Pyrrolidone carboxylic acid mark. The Extracellular segment spans residues 23–700; it reads QECAKYKVST…ETRECVKGPN (678 aa). The PSI domain occupies 24-74; that stretch reads ECAKYKVSTCRDCIESGPGCAWCQKLNFSGQGEPDSVRCDTREQLLAKGCV. 28 disulfides stabilise this stretch: cysteine 25–cysteine 43, cysteine 33–cysteine 447, cysteine 36–cysteine 62, cysteine 46–cysteine 73, cysteine 191–cysteine 198, cysteine 246–cysteine 286, cysteine 386–cysteine 400, cysteine 420–cysteine 445, cysteine 449–cysteine 467, cysteine 459–cysteine 470, cysteine 472–cysteine 481, cysteine 483–cysteine 514, cysteine 497–cysteine 512, cysteine 506–cysteine 517, cysteine 519–cysteine 534, cysteine 536–cysteine 559, cysteine 541–cysteine 557, cysteine 549–cysteine 562, cysteine 564–cysteine 573, cysteine 575–cysteine 598, cysteine 582–cysteine 596, cysteine 590–cysteine 601, cysteine 603–cysteine 612, cysteine 615–cysteine 618, cysteine 622–cysteine 662, cysteine 628–cysteine 647, cysteine 631–cysteine 643, and cysteine 670–cysteine 695. Asparagine 50 and asparagine 116 each carry an N-linked (GlcNAc...) asparagine glycan. Positions 124–363 constitute a VWFA domain; the sequence is GYPIDLYYLM…ELIKNAYNKL (240 aa). Positions 136 and 138 each coordinate Mg(2+). The Ca(2+) site is built by serine 138, aspartate 141, aspartate 142, and aspartate 173. Residues asparagine 229, aspartate 231, proline 233, and glutamate 234 each contribute to the Ca(2+) site. Glutamate 234 is a Mg(2+) binding site. N-linked (GlcNAc...) asparagine glycosylation occurs at asparagine 254. Residues aspartate 264 and glutamate 347 each coordinate Ca(2+). A Cell attachment site motif is present at residues 397-399; it reads RGD. I-EGF domains follow at residues 449–482, 483–535, 536–574, and 575–613; these read CGDS…KHCE, CQTQ…QFCE, CDNM…SACQ, and CLKS…PLCT. The N-linked (GlcNAc...) asparagine glycan is linked to asparagine 501. An N-linked (GlcNAc...) asparagine glycan is attached at asparagine 642. The helical transmembrane segment at 701–723 threads the bilayer; that stretch reads IAAIVGGTVGGVVLVGIFLLVIW. At 724–769 the chain is on the cytoplasmic side; the sequence is KVLTHLSDLREYKRFEKEKLKSQWNNDNPLFKSATTTVMNPKFAER. Phosphoserine is present on residues serine 745 and serine 756. Phosphothreonine occurs at positions 758 and 760.

It belongs to the integrin beta chain family. Heterodimer of an alpha and a beta subunit. The ITGB2 beta subunit associates with the ITGAL, ITGAM, ITGAX or ITGAD alpha subunits. Found in a complex with CD177 and ITGAM/CD11b. Interacts with FGR. Interacts with COPS5 and RANBP9. Interacts with FLNA (via filamin repeats 4, 9, 12, 17, 19, 21, and 23). Interacts with THBD. Post-translationally, both Ser-745 and Ser-756 become phosphorylated when T-cells are exposed to phorbol esters. Phosphorylation on Thr-758 (but not on Ser-756) allows interaction with 14-3-3 proteins.

Its subcellular location is the cell membrane. The protein localises to the membrane raft. Functionally, integrin ITGAL/ITGB2 is a receptor for ICAM1, ICAM2, ICAM3 and ICAM4. Integrin ITGAL/ITGB2 is also a receptor for the secreted form of ubiquitin-like protein ISG15; the interaction is mediated by ITGAL. Integrins ITGAM/ITGB2 and ITGAX/ITGB2 are receptors for the iC3b fragment of the third complement component and for fibrinogen. Integrin ITGAX/ITGB2 recognizes the sequence G-P-R in fibrinogen alpha-chain. Integrin ITGAM/ITGB2 recognizes P1 and P2 peptides of fibrinogen gamma chain. Integrin ITGAM/ITGB2 is also a receptor for factor X. Integrin ITGAD/ITGB2 is a receptor for ICAM3 and VCAM1. Contributes to natural killer cell cytotoxicity. Involved in leukocyte adhesion and transmigration of leukocytes including T-cells and neutrophils. Triggers neutrophil transmigration during lung injury through PTK2B/PYK2-mediated activation. Integrin alpha-L/beta-2 in association with ICAM3, contributes to apoptotic neutrophil phagocytosis by macrophages. The sequence is that of Integrin beta-2 (ITGB2) from Sus scrofa (Pig).